The sequence spans 427 residues: Chitin disaccharide deacetylase (427 aa).

Residues 1–22 form the signal peptide; sequence MKLNKLAIATLVSAALSQYAFA. Residues 28–326 form the NodB homology domain; it reads GTIYLTFDDG…LAKQAGYVFD (299 aa). Chitin-binding type-3 domains follow at residues 333–375 and 382–419; these read PNWQ…SSLW and TNWT…TPNS.

This sequence belongs to the polysaccharide deacetylase family. Carbohydrate-binding module 12 subfamily.

The catalysed reaction is N,N'-diacetylchitobiose + H2O = N-acetyl-beta-D-glucosaminyl-(1-&gt;4)-D-glucosamine + acetate. It participates in glycan degradation; chitin degradation. Its function is as follows. Specifically catalyzes the degradation of N,N'-diacetylchitobiose. Key enzyme in the chitin catabolic cascade. The polypeptide is Chitin disaccharide deacetylase (deaA) (Vibrio alginolyticus).